The primary structure comprises 548 residues: Undecaprenyl phosphate-alpha-4-amino-4-deoxy-L-arabinose arabinosyl transferase 1 (548 aa).

The next 12 helical transmembrane spans lie at 11–31 (WLLF…TRLL), 89–109 (IVVV…AMVV), 114–134 (ALAF…AIGT), 137–157 (ILDP…LVAL), 180–200 (FLTK…VMAI), 214–234 (IALL…ALQA), 263–283 (FYIP…FGAL), 292–312 (GTLY…ASKG), 314–334 (LLTY…HYIE), 347–367 (VNAS…IYSL), 382–402 (KIVL…GALF), and 405–425 (TQFL…YAIP).

It belongs to the glycosyltransferase 83 family.

It is found in the cell inner membrane. The catalysed reaction is 4-amino-4-deoxy-alpha-L-arabinopyranosyl di-trans,octa-cis-undecaprenyl phosphate + lipid IVA = lipid IIA + di-trans,octa-cis-undecaprenyl phosphate.. It functions in the pathway lipopolysaccharide metabolism; 4-amino-4-deoxy-beta-L-arabinose-lipid A biosynthesis. In terms of biological role, catalyzes the transfer of the L-Ara4N moiety of the glycolipid undecaprenyl phosphate-alpha-L-Ara4N to lipid A. The modified arabinose is attached to lipid A and is required for resistance to polymyxin and cationic antimicrobial peptides. This Proteus mirabilis (strain HI4320) protein is Undecaprenyl phosphate-alpha-4-amino-4-deoxy-L-arabinose arabinosyl transferase 1.